The primary structure comprises 429 residues: Tol-Pal system protein TolB (429 aa).

Positions 1 to 22 are cleaved as a signal peptide; sequence MTRRLFILITIMLCLIPALLHS. 2 disordered regions span residues 362–383 and 407–429; these read PDGTNDTRLTSEGSNEHPRWSP and GSGQTRVSGGKGRDSHPTWSPRW. Over residues 363-374 the composition is skewed to polar residues; the sequence is DGTNDTRLTSEG.

Belongs to the TolB family. In terms of assembly, the Tol-Pal system is composed of five core proteins: the inner membrane proteins TolA, TolQ and TolR, the periplasmic protein TolB and the outer membrane protein Pal. They form a network linking the inner and outer membranes and the peptidoglycan layer.

It is found in the periplasm. In terms of biological role, part of the Tol-Pal system, which plays a role in outer membrane invagination during cell division and is important for maintaining outer membrane integrity. This Geobacter metallireducens (strain ATCC 53774 / DSM 7210 / GS-15) protein is Tol-Pal system protein TolB.